The primary structure comprises 428 residues: Maltoporin (428 aa).

The N-terminal stretch at 1 to 21 (MKKTLLAVAIGGAMFATSAAA) is a signal peptide.

It belongs to the porin LamB (TC 1.B.3) family. In terms of assembly, homotrimer formed of three 18-stranded antiparallel beta-barrels, containing three independent channels.

The protein resides in the cell outer membrane. It catalyses the reaction beta-maltose(in) = beta-maltose(out). Functionally, involved in the transport of maltose and maltodextrins. The protein is Maltoporin of Mannheimia succiniciproducens (strain KCTC 0769BP / MBEL55E).